Consider the following 957-residue polypeptide: MSFVIAAPEVIAAAATDLASLGSSISAANAAAAANTTALMAAGADEVSTAIAALFGAHGQAYQALSAQAQAFHAQFVQALTSGGGAYAAAEAAAVSPLLDPINEFFLANTGRPLIGNGANGAPGTGANGGDGGWLIGNGGAGGSGAAGVNGGAGGNGGAGGNGGAGGLIGNGGAGGAGGVASSGIGGSGGAGGNAMLFGAGGAGGAGGGVVALTGGAGGAGGAGGNAGLLFGAAGVGGAGGFTNGSALGGAGGAGGAGGLFATGGVGGSGGAGSSGGAGGAGGAGGLFGAGGTGGHGGFADSSFGGVGGAGGAGGLFGAGGEGGSGGHSLVAGGDGGAGGNAGMLALGAAGGAGGIGGDGGTLTAGGIGGAGGAGGNAGLLFGSGGSGGAGGFGFADGGQGGPGGNAGTVFGSGGAGGNGGVGQGFAGGIGGAGGTPGLIGNGGNGGNGGASAVTGGNGGIGGTGVLIGNGGNGGSGGIGAGKAGVGGVSGLLLGLDGFNAPASTSPLHTLQQNVLNVVNEPFQTLTGRPLIGNGANGTPGTGADGGAGGWLFGNGANGTPGTGAAGGAGGWLFGNGGNGGHGATNTAATATGGAGGAGGILFGTGGNGGTGGIATGAGGIGGAGGAGGVSLLIGSGGTGGNGGNSIGVAGIGGAGGRGGDAGLLFGAAGTGGHGAAGGVPAGVGGAGGNGGLFANGGAGGAGGFNAAGGNGGNGGLFGTGGTGGAGTNFGAGGNGGNGGLFGAGGTGGAAGSGGSGITTGGGGHGGNAGLLSLGASGGAGGSGGASSLAGGAGGTGGNGALLFGFRGAGGAGGHGGAALTSIQQGGAGGAGGNGGLLFGSAGAGGAGGSGANALGAGTGGTGGDGGHAGVFGNGGDGGCRRVWRRYRRQRWCRRQRRADRQRRQRRQRRQSRGHARCRRHRRAAARRERTQRLAIAGRPATTRGVEGISCSPQMMP.

A PE domain is found at 4-94 (VIAAPEVIAA…GAYAAAEAAA (91 aa)). Basic residues predominate over residues 893–925 (CRRQRRADRQRRQRRQRRQSRGHARCRRHRRAA). A disordered region spans residues 893-957 (CRRQRRADRQ…GISCSPQMMP (65 aa)).

The protein belongs to the mycobacterial PE family. PGRS subfamily. In terms of processing, a cleavage of the protein removes the N-terminal 120-150 residues, immediately upstream the PGRS domain. The exact position of the cleavage site could not be identified.

It is found in the cell outer membrane. The protein localises to the secreted. Its subcellular location is the cell wall. It localises to the cell surface. In terms of biological role, the arginine-rich C-terminal region protrudes from the mycobacterial membrane and mediates M.tuberculosis entry into host epithelial cells. May serve as a bridge between mycobacteria and host cells by interacting with specific host phospholipids and extracting them from host cells, for their direct integration or as a source of phosphate, during phases of TB pathogenesis when M.tuberculosis is short of phosphate supply. The chain is PE-PGRS family protein PE_PGRS3 from Mycobacterium tuberculosis (strain ATCC 25618 / H37Rv).